A 309-amino-acid chain; its full sequence is D-alanine--D-alanine ligase (309 aa).

Positions 105–304 (KQIWHSVGLP…FNDLVERILA (200 aa)) constitute an ATP-grasp domain. 135 to 190 (LQELGGRVIVKPAREGSSIGMSIADNGRSLALALQHAAEFDDDLLVEQWVEGAEYT) serves as a coordination point for ATP. Mg(2+) is bound by residues aspartate 258, glutamate 271, and asparagine 273.

It belongs to the D-alanine--D-alanine ligase family. Mg(2+) is required as a cofactor. It depends on Mn(2+) as a cofactor.

Its subcellular location is the cytoplasm. The catalysed reaction is 2 D-alanine + ATP = D-alanyl-D-alanine + ADP + phosphate + H(+). Its pathway is cell wall biogenesis; peptidoglycan biosynthesis. Its function is as follows. Cell wall formation. This chain is D-alanine--D-alanine ligase, found in Idiomarina loihiensis (strain ATCC BAA-735 / DSM 15497 / L2-TR).